A 122-amino-acid chain; its full sequence is MIQQETRLKVADNSGARSLLCIRVLGGSKRRSAGIGDVIVASVKEATPGGAVKKGDVVRAVVVRTKKETRREDGSYIRFGENAGVLINSDGSPRGTRIFGPVARELREKGYTRIISLAPEVL.

Belongs to the universal ribosomal protein uL14 family. As to quaternary structure, part of the 50S ribosomal subunit. Forms a cluster with proteins L3 and L19. In the 70S ribosome, L14 and L19 interact and together make contacts with the 16S rRNA in bridges B5 and B8.

Its function is as follows. Binds to 23S rRNA. Forms part of two intersubunit bridges in the 70S ribosome. In Rubrobacter xylanophilus (strain DSM 9941 / JCM 11954 / NBRC 16129 / PRD-1), this protein is Large ribosomal subunit protein uL14.